We begin with the raw amino-acid sequence, 314 residues long: tRNA N6-adenosine threonylcarbamoyltransferase (314 aa).

3 residues coordinate Fe cation: H106, H110, and Y127. Substrate contacts are provided by residues 127–131 (YVSGA), D159, G172, E176, and N255. A Fe cation-binding site is contributed by D283.

This sequence belongs to the KAE1 / TsaD family. Requires Fe(2+) as cofactor.

It localises to the cytoplasm. It carries out the reaction L-threonylcarbamoyladenylate + adenosine(37) in tRNA = N(6)-L-threonylcarbamoyladenosine(37) in tRNA + AMP + H(+). Functionally, required for the formation of a threonylcarbamoyl group on adenosine at position 37 (t(6)A37) in tRNAs that read codons beginning with adenine. Is probably involved in the transfer of the threonylcarbamoyl moiety of threonylcarbamoyl-AMP (TC-AMP) to the N6 group of A37. The protein is tRNA N6-adenosine threonylcarbamoyltransferase of Nanoarchaeum equitans (strain Kin4-M).